Here is a 913-residue protein sequence, read N- to C-terminus: Calcium-activated chloride channel regulator 1 (913 aa).

A signal peptide spans 1 to 21 (MGPFKSSVFILILHLLEGALS). The metalloprotease domain stretch occupies residues 46–199 (DETLIQQIKD…GITGKIEVNK (154 aa)). H156 provides a ligand contact to Zn(2+). The active site involves E157. Zn(2+)-binding residues include H160 and D167. The VWFA domain maps to 306 to 475 (IVCLVLDKSG…NGLIDAFGAL (170 aa)). N-linked (GlcNAc...) asparagine glycans are attached at residues N503, N769, N803, N809, N830, N835, N885, and N889. Positions 866-885 (PPQTPPETPSPDETSAPCPN) are disordered.

It belongs to the CLCR family. Glycosylated. In terms of processing, the translation product is autoproteolytically cleaved by the metalloprotease domain in the endoplasmic reticulum into a N-terminal and a C-terminal products that remain physically associated with each other. The cleavage is necessary for calcium-activated chloride channel (CaCC) activation activity.

The protein localises to the secreted. It is found in the extracellular space. May be involved in mediating calcium-activated chloride conductance. May play critical roles in goblet cell metaplasia, mucus hypersecretion, cystic fibrosis and AHR. May be involved in the regulation of mucus production and/or secretion by goblet cells. Involved in the regulation of tissue inflammation in the innate immune response. May play a role as a tumor suppressor. Induces MUC5AC. The polypeptide is Calcium-activated chloride channel regulator 1 (CLCA1) (Macaca mulatta (Rhesus macaque)).